We begin with the raw amino-acid sequence, 260 residues long: 3-methyl-2-oxobutanoate hydroxymethyltransferase (260 aa).

Mg(2+) is bound by residues Asp44 and Asp83. 3-methyl-2-oxobutanoate contacts are provided by residues 44–45 (DS), Asp83, and Lys113. Glu115 serves as a coordination point for Mg(2+). The Proton acceptor role is filled by Glu182.

Belongs to the PanB family. Homodecamer; pentamer of dimers. Mg(2+) is required as a cofactor.

The protein resides in the cytoplasm. The catalysed reaction is 3-methyl-2-oxobutanoate + (6R)-5,10-methylene-5,6,7,8-tetrahydrofolate + H2O = 2-dehydropantoate + (6S)-5,6,7,8-tetrahydrofolate. It participates in cofactor biosynthesis; (R)-pantothenate biosynthesis; (R)-pantoate from 3-methyl-2-oxobutanoate: step 1/2. Catalyzes the reversible reaction in which hydroxymethyl group from 5,10-methylenetetrahydrofolate is transferred onto alpha-ketoisovalerate to form ketopantoate. The chain is 3-methyl-2-oxobutanoate hydroxymethyltransferase from Synechocystis sp. (strain ATCC 27184 / PCC 6803 / Kazusa).